The following is a 267-amino-acid chain: Eukaryotic translation initiation factor 3 subunit J (267 aa).

Disordered regions lie at residues 1–118 and 221–241; these read MAPS…DLKH and MREERAADKGNKKTKAAKTKV. Residues 28 to 46 show a composition bias toward acidic residues; sequence DEEEEDVLDSWDAAEDSEV. Residues 44 to 99 adopt a coiled-coil conformation; that stretch reads SEVEREKAAKAAAAAAKAEAEAAAKKKSKAQRIEERKQERKKLAEANESDEDSEED. Over residues 74-88 the composition is skewed to basic and acidic residues; it reads QRIEERKQERKKLAE. The span at 90 to 100 shows a compositional bias: acidic residues; that stretch reads NESDEDSEEDE. Composition is skewed to basic and acidic residues over residues 108–118 and 221–231; these read RRTEKEGDLKH and MREERAADKGN.

This sequence belongs to the eIF-3 subunit J family. In terms of assembly, component of the eukaryotic translation initiation factor 3 (eIF-3) complex.

The protein resides in the cytoplasm. Its function is as follows. Component of the eukaryotic translation initiation factor 3 (eIF-3) complex, which is involved in protein synthesis of a specialized repertoire of mRNAs and, together with other initiation factors, stimulates binding of mRNA and methionyl-tRNAi to the 40S ribosome. The eIF-3 complex specifically targets and initiates translation of a subset of mRNAs involved in cell proliferation. This Aspergillus fumigatus (strain CBS 144.89 / FGSC A1163 / CEA10) (Neosartorya fumigata) protein is Eukaryotic translation initiation factor 3 subunit J (hcr1).